The chain runs to 171 residues: Odorant-binding protein 1b (171 aa).

Positions 1–19 (MMVKFLLLALVFGLAHVHA) are cleaved as a signal peptide. 2 disulfide bridges follow: Cys-57–Cys-61 and Cys-76–Cys-169.

The protein belongs to the calycin superfamily. Lipocalin family. May form a heterodimer with OBP1A. Post-translationally, the N-terminus may be blocked. As to expression, expressed in nasal mucosa (at protein level). Specifically detected in septal and lateral nasal glands.

It is found in the secreted. Its function is as follows. Binds the chemical odorant 2-isobutyl-3-methoxypyrazine. The sequence is that of Odorant-binding protein 1b from Mus musculus (Mouse).